Reading from the N-terminus, the 95-residue chain is Large ribosomal subunit protein bL25 (95 aa).

This sequence belongs to the bacterial ribosomal protein bL25 family. Part of the 50S ribosomal subunit; part of the 5S rRNA/L5/L18/L25 subcomplex. Contacts the 5S rRNA. Binds to the 5S rRNA independently of L5 and L18.

Its function is as follows. This is one of the proteins that binds to the 5S RNA in the ribosome where it forms part of the central protuberance. The protein is Large ribosomal subunit protein bL25 of Shewanella frigidimarina (strain NCIMB 400).